A 494-amino-acid chain; its full sequence is Guanosine-5'-triphosphate,3'-diphosphate pyrophosphatase (494 aa).

Belongs to the GppA/Ppx family. GppA subfamily.

The enzyme catalyses guanosine 3'-diphosphate 5'-triphosphate + H2O = guanosine 3',5'-bis(diphosphate) + phosphate + H(+). It participates in purine metabolism; ppGpp biosynthesis; ppGpp from GTP: step 2/2. Functionally, catalyzes the conversion of pppGpp to ppGpp. Guanosine pentaphosphate (pppGpp) is a cytoplasmic signaling molecule which together with ppGpp controls the 'stringent response', an adaptive process that allows bacteria to respond to amino acid starvation, resulting in the coordinated regulation of numerous cellular activities. This is Guanosine-5'-triphosphate,3'-diphosphate pyrophosphatase from Cronobacter sakazakii (strain ATCC BAA-894) (Enterobacter sakazakii).